The following is a 296-amino-acid chain: MKLAQGTVVGLIAGYYDVETATGIVRTRARGVFRQKKQKPAVGDRVEIQIDDKGMSYLVEILPRINRIGRPAVANVSHVLLVISAVEPDFSLELLDRFLTFFSWQKVNVTIYLSKADLISEQRLNEIKESLDYYQKIGYPVFIDYHHLEEKIGDMIKDNQIWTLAGQSGAGKSTLLNHLKKDANQTTGAISTSLNRGKHTTRKVELFKLGHGFLADTPGFSSIDLTPIKLNELCNYFIEFKRASKKCKFRGCQHIKEPGCEVKKLLEEGKILHSRYDDYLAMRTEINEGRMPEYLK.

Residues 65 to 223 (INRIGRPAVA…LADTPGFSSI (159 aa)) form the CP-type G domain. Residues 114–117 (SKAD) and 166–174 (GQSGAGKST) contribute to the GTP site. Zn(2+)-binding residues include Cys247, Cys252, His254, and Cys260.

Belongs to the TRAFAC class YlqF/YawG GTPase family. RsgA subfamily. As to quaternary structure, monomer. Associates with 30S ribosomal subunit, binds 16S rRNA. Zn(2+) serves as cofactor.

The protein resides in the cytoplasm. In terms of biological role, one of several proteins that assist in the late maturation steps of the functional core of the 30S ribosomal subunit. Helps release RbfA from mature subunits. May play a role in the assembly of ribosomal proteins into the subunit. Circularly permuted GTPase that catalyzes slow GTP hydrolysis, GTPase activity is stimulated by the 30S ribosomal subunit. This is Small ribosomal subunit biogenesis GTPase RsgA from Lactobacillus acidophilus (strain ATCC 700396 / NCK56 / N2 / NCFM).